The chain runs to 163 residues: MKKLTYRKIQSFQAIITVLVIFASFYLEYAAGLQPCPLCLMQRVCVFILLGLMGVSLGTVKKAHIVSLIQFQVACAGLYFSLRQLWLQSLPSDQAPACMPGLDVLIQYFPWQTVAKALFWGAGDCAEVTWTMFGVSMPGWAAMYFLSMAIMGLFLFFRTRTIN.

Residues 1-9 (MKKLTYRKI) are Cytoplasmic-facing. Residues 10–26 (QSFQAIITVLVIFASFY) form a helical membrane-spanning segment. Topologically, residues 27–44 (LEYAAGLQPCPLCLMQRV) are periplasmic. C36 and C39 form a disulfide bridge. A helical transmembrane segment spans residues 45-58 (CVFILLGLMGVSLG). Topologically, residues 59–64 (TVKKAH) are cytoplasmic. The chain crosses the membrane as a helical span at residues 65–82 (IVSLIQFQVACAGLYFSL). The Periplasmic segment spans residues 83 to 139 (RQLWLQSLPSDQAPACMPGLDVLIQYFPWQTVAKALFWGAGDCAEVTWTMFGVSMPG). C98 and C125 are oxidised to a cystine. Residues 140-158 (WAAMYFLSMAIMGLFLFFR) form a helical membrane-spanning segment. Residues 159 to 163 (TRTIN) are Cytoplasmic-facing.

It belongs to the DsbB family.

It is found in the cell inner membrane. Required for disulfide bond formation in some periplasmic proteins. Acts by oxidizing the DsbA protein. In Legionella pneumophila (strain Lens), this protein is Disulfide bond formation protein B.